The chain runs to 426 residues: Serine--tRNA ligase (426 aa).

Residue 233-235 participates in L-serine binding; sequence TAE. 264 to 266 serves as a coordination point for ATP; that stretch reads RSE. Position 287 (glutamate 287) interacts with L-serine. 351–354 provides a ligand contact to ATP; that stretch reads EISS. Residue serine 387 coordinates L-serine.

The protein belongs to the class-II aminoacyl-tRNA synthetase family. Type-1 seryl-tRNA synthetase subfamily. Homodimer. The tRNA molecule binds across the dimer.

Its subcellular location is the cytoplasm. The enzyme catalyses tRNA(Ser) + L-serine + ATP = L-seryl-tRNA(Ser) + AMP + diphosphate + H(+). It carries out the reaction tRNA(Sec) + L-serine + ATP = L-seryl-tRNA(Sec) + AMP + diphosphate + H(+). It functions in the pathway aminoacyl-tRNA biosynthesis; selenocysteinyl-tRNA(Sec) biosynthesis; L-seryl-tRNA(Sec) from L-serine and tRNA(Sec): step 1/1. Its function is as follows. Catalyzes the attachment of serine to tRNA(Ser). Is also able to aminoacylate tRNA(Sec) with serine, to form the misacylated tRNA L-seryl-tRNA(Sec), which will be further converted into selenocysteinyl-tRNA(Sec). In Pseudomonas savastanoi pv. phaseolicola (strain 1448A / Race 6) (Pseudomonas syringae pv. phaseolicola (strain 1448A / Race 6)), this protein is Serine--tRNA ligase.